The following is a 599-amino-acid chain: MTISASDYRHPGNFLKRTTALLCVGTALTALAFNASAACTYTIDSEWSTGFTANITLKNDTGAAINNWNVNWQYSSNRMTSGWNANFSGTNPYNATNMSWNGSIAPGQSISFGLQGEKNGSTAERPTVTGAACNSATTSSVASSSSTPTTSSSSASSVASALLLQEAQAGFCRVDGTIDNNHTGFTGSGFANTNNAQGAAVVWAIDATSSGRRTLTIRYANGGTANRNGSLVINGGSNGNYTVSLPTTGAWTTWQTATIDVDLVQGNNIVQLSATTAEGLPNIDSLSVVGGTVRAGNCGSVSSSSSVQSSSSSSSSSAASAKKFIGNITTSGAVRSDFTRYWNQITPENESKWGSVEGTRNVYNWAPLDRIYAYARQNNIPVKAHTFVWGAQSPSWLNNLSGPEVAVEIEQWIRDYCARYPDTAMIDVVNEAVPGHQPAGYAQRAFGNNWIQRVFQLARQYCPNSILILNDYNNIRWQHNEFIALAKAQGNYIDAVGLQAHELKGMTAAQVKTAIDNIWNQVGKPIYISEYDIGDTNDQVQLQNFQAHFPVFYNHPHVHGITLWGYVVGRTWIEGSGLIQDNGTPRPAMTWLINNYLNQ.

The signal sequence occupies residues 1-37 (MTISASDYRHPGNFLKRTTALLCVGTALTALAFNASA). The CBM2 domain occupies 38–136 (ACTYTIDSEW…TVTGAACNSA (99 aa)). C39 and C133 form a disulfide bridge. One can recognise a CBM6 domain in the interval 163-289 (LLQEAQAGFC…LPNIDSLSVV (127 aa)). The region spanning 315 to 595 (SSSAASAKKF…RPAMTWLINN (281 aa)) is the GH10 domain. E431 acts as the Proton donor in catalysis. Residue E530 is the Nucleophile of the active site.

Belongs to the glycosyl hydrolase 10 (cellulase F) family.

It carries out the reaction Endohydrolysis of (1-&gt;4)-beta-D-xylosidic linkages in xylans.. It functions in the pathway glycan metabolism; hemicellulose degradation. Its function is as follows. Xylanase B contributes to hydrolyze hemicellulose, the major component of plant cell-walls. This is Endo-1,4-beta-xylanase B (xynB) from Cellvibrio japonicus (strain Ueda107) (Pseudomonas fluorescens subsp. cellulosa).